Here is a 1092-residue protein sequence, read N- to C-terminus: Extended synaptotagmin-1 (1092 aa).

An N-acetylmethionine modification is found at Met-1. The Cytoplasmic portion of the chain corresponds to 1 to 28; the sequence is MEHSPEEGASPEPSGQPPATDSTRDGGS. The tract at residues 1-36 is disordered; sequence MEHSPEEGASPEPSGQPPATDSTRDGGSGVPPAGPG. A helical transmembrane segment spans residues 29–49; that stretch reads GVPPAGPGAASEALAVLTSFG. At 50–52 the chain is on the lumenal side; the sequence is RRL. Residues 53-73 traverse the membrane as a helical segment; the sequence is LVLVPVYLAGAAGLSVGFVLF. Residues 74-1092 lie on the Cytoplasmic side of the membrane; the sequence is GLALYLGWRR…LMDDRDKGGS (1019 aa). Residues 125 to 303 form the SMP-LTD domain; the sequence is DVEKAEWLNK…LPNRLLVPLV (179 aa). C2 domains are found at residues 302-423, 444-570, 616-738, and 769-886; these read LVPD…DNWY, DAEK…QLSS, DAPP…DEWL, and QVNS…ALSG. Ser-314 is subject to Phosphoserine; by CDK5. Lys-334, Asp-335, Asp-347, Asp-394, Asp-396, Asp-398, Asp-400, and Asp-401 together coordinate Ca(2+). The segment at 604-628 is disordered; sequence WDRESLETGSSVDAPPRPYHTTPNS. Lys-804 carries the N6-acetyllysine modification. Ser-807 is modified (phosphoserine). The segment at 909–937 is disordered; the sequence is HSHSYSHSHSSSSLNDEPEALGGPTHPAS. Low complexity predominate over residues 911–921; it reads HSYSHSHSSSS. Phosphoserine is present on residues Ser-937 and Ser-951. A C2 5 domain is found at 959 to 1081; the sequence is PLGQVKLTVW…DLSQGAAQWY (123 aa). Phosphotyrosine is present on Tyr-997. The interval 1006–1013 is required for phosphatidylinositol 4,5-bisphosphate-dependent location at the cell membrane; the sequence is KNRSTKRK.

It belongs to the extended synaptotagmin family. In terms of assembly, interacts with ESYT2 and ESYT3. Interacts with ADGRD1; inhibiting the G-protein-coupled receptor activity of ADGRD1. Interaction with ADGRD1 is abolished when cytosolic calcium increases, relieving ADGRD1 G-protein-coupled receptor activity. Interacts (phosphorylated form) with SLC2A4. Post-translationally, phosphorylated on Ser residues in insulin-treated adipocytes (in vitro); this promotes interaction with SLC2A4.

It is found in the endoplasmic reticulum membrane. Its subcellular location is the cell membrane. Binds calcium (via the C2 domains) and translocates to sites of contact between the endoplasmic reticulum and the cell membrane in response to increased cytosolic calcium levels. Helps tether the endoplasmic reticulum to the cell membrane and promotes the formation of appositions between the endoplasmic reticulum and the cell membrane. Acts as an inhibitor of ADGRD1 G-protein-coupled receptor activity in absence of cytosolic calcium. Binds glycerophospholipids in a barrel-like domain and may play a role in cellular lipid transport. The sequence is that of Extended synaptotagmin-1 (Esyt1) from Mus musculus (Mouse).